Consider the following 118-residue polypeptide: MLPARYRMTRSTEFSTTVSKGVRSAQPDLVLHMANVLDDPSGPRVGLVVAKSVGNAVVRHRVSRRLRHSVHPMLDELQPGHRLVIRALPGAASATSARLHQELSAALRRARPRVEASA.

Belongs to the RnpA family. In terms of assembly, consists of a catalytic RNA component (M1 or rnpB) and a protein subunit.

The catalysed reaction is Endonucleolytic cleavage of RNA, removing 5'-extranucleotides from tRNA precursor.. Its function is as follows. RNaseP catalyzes the removal of the 5'-leader sequence from pre-tRNA to produce the mature 5'-terminus. It can also cleave other RNA substrates such as 4.5S RNA. The protein component plays an auxiliary but essential role in vivo by binding to the 5'-leader sequence and broadening the substrate specificity of the ribozyme. The protein is Ribonuclease P protein component of Mycobacterium sp. (strain KMS).